Reading from the N-terminus, the 386-residue chain is Palmitoyltransferase ZDHHC18 (386 aa).

The disordered stretch occupies residues 1-65 (MKDCEYQQIS…GSGSLGRRPR (65 aa)). Over 1 to 88 (MKDCEYQQIS…CGGRLMLAGH (88 aa)) the chain is Cytoplasmic. Ser-19 is subject to Phosphoserine. A compositionally biased stretch (pro residues) spans 27 to 40 (PAAPPGPSPGPAPG). Over residues 49-59 (SGSGSGSGSGS) the composition is skewed to gly residues. Residues 89–109 (GGVFALTLLLILSTTILFFIF) form a helical membrane-spanning segment. Over 110–117 (DCPYLART) the chain is Lumenal. Residues 118-138 (LTLAIPIIAAILFFFVMSCLL) traverse the membrane as a helical segment. The Cytoplasmic portion of the chain corresponds to 139–233 (QTSFTDPGIL…GNCVGRRNYR (95 aa)). In terms of domain architecture, DHHC spans 190-240 (KYCFTCKMFRPPRTSHCSVCDNCVERFDHHCPWVGNCVGRRNYRFFYAFIL). Cys-220 acts as the S-palmitoyl cysteine intermediate in catalysis. Residues 234–254 (FFYAFILSLSFLTAFIFACVV) form a helical membrane-spanning segment. Topologically, residues 255–275 (THLTLLSQGSNFLSALNKTPA) are lumenal. The chain crosses the membrane as a helical span at residues 276–296 (GVLELVICFFSIWSILGLSGF). Residues 297–386 (HTYLVASNLT…PDASMVGGHP (90 aa)) lie on the Cytoplasmic side of the membrane. A disordered region spans residues 362 to 386 (LPSPIRSDEPACGAKPDASMVGGHP).

Belongs to the DHHC palmitoyltransferase family. ERF2/ZDHHC9 subfamily.

Its subcellular location is the golgi apparatus membrane. It catalyses the reaction L-cysteinyl-[protein] + hexadecanoyl-CoA = S-hexadecanoyl-L-cysteinyl-[protein] + CoA. Functionally, palmitoyltransferase that catalyzes the addition of palmitate onto various protein substrates, such as CGAS, HRAS and LCK. Acts as a negative regulator of the cGAS-STING pathway be mediating palmitoylation and inactivation of CGAS. May also have a palmitoyltransferase activity toward the beta-2 adrenergic receptor/ADRB2 and therefore regulate G protein-coupled receptor signaling. This Rattus norvegicus (Rat) protein is Palmitoyltransferase ZDHHC18.